The following is a 265-amino-acid chain: Mlc titration factor A (265 aa).

4 residues coordinate Zn(2+): His111, His148, His152, and Glu211.

Belongs to the MtfA family. In terms of assembly, interacts with Mlc. The cofactor is Zn(2+).

The protein localises to the cytoplasm. Functionally, involved in the modulation of the activity of the glucose-phosphotransferase system (glucose-PTS). Interacts with the transcriptional repressor Mlc, preventing its interaction with DNA and leading to the modulation of expression of genes regulated by Mlc, including ptsG, which encodes the PTS system glucose-specific EIICB component. Its function is as follows. Shows zinc-dependent metallopeptidase activity. This chain is Mlc titration factor A, found in Escherichia coli O139:H28 (strain E24377A / ETEC).